Consider the following 164-residue polypeptide: 5-formyltetrahydrofolate cyclo-ligase (164 aa).

Residue 3–7 (KNALR) participates in ATP binding. Substrate is bound by residues glutamate 50 and glutamate 55. 115–123 (RLGFGKGYY) lines the ATP pocket. Aspartate 124 contacts Mg(2+). Residues arginine 125 and tryptophan 153 each coordinate ATP. A Mg(2+)-binding site is contributed by aspartate 154.

The protein belongs to the 5-formyltetrahydrofolate cyclo-ligase family. Monomer or homodimer. Mg(2+) is required as a cofactor. Requires Mn(2+) as cofactor. It depends on Ca(2+) as a cofactor. Zn(2+) serves as cofactor. The cofactor is Fe(2+). Co(2+) is required as a cofactor. Requires Cu(2+) as cofactor.

It localises to the cytoplasm. It catalyses the reaction (6S)-5-formyl-5,6,7,8-tetrahydrofolate + ATP = (6R)-5,10-methenyltetrahydrofolate + ADP + phosphate. In terms of biological role, involved in folate metabolism. Catalyzes the irreversible conversion of 5-formyltetrahydrofolate (5-FTHF) to yield 5,10-methenyltetrahydrofolate. The chain is 5-formyltetrahydrofolate cyclo-ligase from Mycoplasma pneumoniae (strain ATCC 29342 / M129 / Subtype 1) (Mycoplasmoides pneumoniae).